The chain runs to 262 residues: Adenosylcobinamide-GDP ribazoletransferase (262 aa).

The next 5 membrane-spanning stretches (helical) occupy residues 41–61 (AFPL…FILG), 65–85 (ASSL…TGAL), 115–132 (IGTY…LRVS), 134–156 (LAAF…TAAL), and 195–215 (GVLL…AVWL).

It belongs to the CobS family. Mg(2+) serves as cofactor.

It is found in the cell inner membrane. The enzyme catalyses alpha-ribazole + adenosylcob(III)inamide-GDP = adenosylcob(III)alamin + GMP + H(+). It catalyses the reaction alpha-ribazole 5'-phosphate + adenosylcob(III)inamide-GDP = adenosylcob(III)alamin 5'-phosphate + GMP + H(+). It participates in cofactor biosynthesis; adenosylcobalamin biosynthesis; adenosylcobalamin from cob(II)yrinate a,c-diamide: step 7/7. Joins adenosylcobinamide-GDP and alpha-ribazole to generate adenosylcobalamin (Ado-cobalamin). Also synthesizes adenosylcobalamin 5'-phosphate from adenosylcobinamide-GDP and alpha-ribazole 5'-phosphate. This Rhizobium meliloti (strain 1021) (Ensifer meliloti) protein is Adenosylcobinamide-GDP ribazoletransferase.